A 557-amino-acid chain; its full sequence is TWiK family of potassium channels protein 7 (557 aa).

Disordered stretches follow at residues 1-34 (MTSS…EALL) and 128-151 (DKSG…EEEE). Topologically, residues 1-165 (MTSSSRGYQR…RKFAKLVLPH (165 aa)) are cytoplasmic. The span at 134–151 (DIDDESDDESKDEDEEEE) shows a compositional bias: acidic residues. Residues 166 to 186 (VALVLLTCTYTVIGALIFYSV) form a helical membrane-spanning segment. 2 N-linked (GlcNAc...) asparagine glycosylation sites follow: Asn220 and Asn237. Positions 270 to 290 (SIFFAVTVVTTIGYGNPVPVT) form an intramembrane region, pore-forming. The helical transmembrane segment at 295–315 (IWCILFSLLGIPLTLVTIADL) threads the bilayer. The Cytoplasmic segment spans residues 316-368 (GKFLSEHLVWLYGNYLKLKYLILSRHRKERREHVCEHCHSHGMGHDMNIEEKR). The helical transmembrane segment at 369–389 (IPAFLVLAILIVYTAFGGVLM) threads the bilayer. An intramembrane region (pore-forming) is located at residues 397 to 417 (FFTSFYWSFITMTTVGFGDLM). Residues 426-446 (IILLYIILGLAITTMCIDLVG) form a helical membrane-spanning segment. The Cytoplasmic portion of the chain corresponds to 447 to 557 (VQYIRKIHYF…SRYSLNRAFK (111 aa)).

The protein belongs to the two pore domain potassium channel (TC 1.A.1.8) family.

It is found in the membrane. This Caenorhabditis elegans protein is TWiK family of potassium channels protein 7 (twk-7).